Reading from the N-terminus, the 70-residue chain is Exodeoxyribonuclease 7 small subunit (70 aa).

The protein belongs to the XseB family. Heterooligomer composed of large and small subunits.

It is found in the cytoplasm. It carries out the reaction Exonucleolytic cleavage in either 5'- to 3'- or 3'- to 5'-direction to yield nucleoside 5'-phosphates.. Functionally, bidirectionally degrades single-stranded DNA into large acid-insoluble oligonucleotides, which are then degraded further into small acid-soluble oligonucleotides. This chain is Exodeoxyribonuclease 7 small subunit, found in Magnetococcus marinus (strain ATCC BAA-1437 / JCM 17883 / MC-1).